The primary structure comprises 329 residues: Serine, glycine and glutamine-rich protein (329 aa).

An N-terminal signal peptide occupies residues 1–16 (MKTVLLFVVLVGLAYC). The segment covering 38–48 (SSSSSSSSSSS) has biased composition (low complexity). A disordered region spans residues 38 to 80 (SSSSSSSSSSSSGGGGSSGGGASGGGGGSSSGGGGASGGGGGG). The span at 49 to 80 (SGGGGSSGGGASGGGGGSSSGGGGASGGGGGG) shows a compositional bias: gly residues.

In terms of tissue distribution, prismatic layer of shell (at protein level). Expressed primarily in the mantle with highest level in the mantle edge and lower level in the mantle pallium.

Its subcellular location is the secreted. This chain is Serine, glycine and glutamine-rich protein, found in Pinctada maxima (Silver-lipped pearl oyster).